Here is a 120-residue protein sequence, read N- to C-terminus: MDKKQSRLRRGRQTRAKIAELKVNRLAVHRTNLHIYASIIGPDATVLASASTLEAEVRQELAGQSGKGGNVAAAALVGKRVAEKALKAGIAEVAFDRSGFRYHGRVKAVAEAAREAGLKF.

The protein belongs to the universal ribosomal protein uL18 family. In terms of assembly, part of the 50S ribosomal subunit; part of the 5S rRNA/L5/L18/L25 subcomplex. Contacts the 5S and 23S rRNAs.

This is one of the proteins that bind and probably mediate the attachment of the 5S RNA into the large ribosomal subunit, where it forms part of the central protuberance. This is Large ribosomal subunit protein uL18 from Janthinobacterium sp. (strain Marseille) (Minibacterium massiliensis).